We begin with the raw amino-acid sequence, 203 residues long: Probable Tat proofreading chaperone DmsD (203 aa).

Belongs to the TorD/DmsD family. DmsD subfamily.

Functionally, required for biogenesis/assembly of DMSO reductase, but not for the interaction of the DmsA signal peptide with the Tat system. May be part of a chaperone cascade complex that facilitates a folding-maturation pathway for the substrate protein. The sequence is that of Probable Tat proofreading chaperone DmsD from Haemophilus influenzae (strain ATCC 51907 / DSM 11121 / KW20 / Rd).